A 442-amino-acid polypeptide reads, in one-letter code: Phosphoglucosamine mutase (442 aa).

S103 functions as the Phosphoserine intermediate in the catalytic mechanism. Residues S103, D241, D243, and D245 each coordinate Mg(2+). S103 is subject to Phosphoserine.

The protein belongs to the phosphohexose mutase family. Mg(2+) is required as a cofactor. In terms of processing, activated by phosphorylation.

It carries out the reaction alpha-D-glucosamine 1-phosphate = D-glucosamine 6-phosphate. Catalyzes the conversion of glucosamine-6-phosphate to glucosamine-1-phosphate. This chain is Phosphoglucosamine mutase, found in Deinococcus deserti (strain DSM 17065 / CIP 109153 / LMG 22923 / VCD115).